A 249-amino-acid polypeptide reads, in one-letter code: 5'-nucleotidase SurE (249 aa).

A divalent metal cation is bound by residues Asp-8, Asp-9, Ser-39, and Asn-91.

Belongs to the SurE nucleotidase family. It depends on a divalent metal cation as a cofactor.

The protein resides in the cytoplasm. It catalyses the reaction a ribonucleoside 5'-phosphate + H2O = a ribonucleoside + phosphate. Its function is as follows. Nucleotidase that shows phosphatase activity on nucleoside 5'-monophosphates. The sequence is that of 5'-nucleotidase SurE from Pseudomonas fluorescens (strain SBW25).